We begin with the raw amino-acid sequence, 283 residues long: Bifunctional protein FolD (283 aa).

NADP(+)-binding positions include 165 to 167 and Ser-190; that span reads GRS.

The protein belongs to the tetrahydrofolate dehydrogenase/cyclohydrolase family. In terms of assembly, homodimer.

It catalyses the reaction (6R)-5,10-methylene-5,6,7,8-tetrahydrofolate + NADP(+) = (6R)-5,10-methenyltetrahydrofolate + NADPH. It carries out the reaction (6R)-5,10-methenyltetrahydrofolate + H2O = (6R)-10-formyltetrahydrofolate + H(+). It functions in the pathway one-carbon metabolism; tetrahydrofolate interconversion. Catalyzes the oxidation of 5,10-methylenetetrahydrofolate to 5,10-methenyltetrahydrofolate and then the hydrolysis of 5,10-methenyltetrahydrofolate to 10-formyltetrahydrofolate. The polypeptide is Bifunctional protein FolD (Methylibium petroleiphilum (strain ATCC BAA-1232 / LMG 22953 / PM1)).